Here is a 503-residue protein sequence, read N- to C-terminus: Aromatase (503 aa).

A run of 3 helical transmembrane segments spans residues 19-39 (EVMP…LLVW), 51-71 (GYCM…MGIG), and 303-323 (MLIA…FLIA). The substrate site is built by aspartate 309 and methionine 374. A heme-binding site is contributed by cysteine 437.

This sequence belongs to the cytochrome P450 family. Requires heme as cofactor.

It localises to the endoplasmic reticulum membrane. The protein localises to the microsome membrane. The enzyme catalyses testosterone + 3 reduced [NADPH--hemoprotein reductase] + 3 O2 = 17beta-estradiol + formate + 3 oxidized [NADPH--hemoprotein reductase] + 4 H2O + 4 H(+). The catalysed reaction is androst-4-ene-3,17-dione + 3 reduced [NADPH--hemoprotein reductase] + 3 O2 = estrone + formate + 3 oxidized [NADPH--hemoprotein reductase] + 4 H2O + 4 H(+). It catalyses the reaction androst-4-ene-3,17-dione + reduced [NADPH--hemoprotein reductase] + O2 = 19-hydroxyandrost-4-ene-3,17-dione + oxidized [NADPH--hemoprotein reductase] + H2O + H(+). It carries out the reaction 19-hydroxyandrost-4-ene-3,17-dione + reduced [NADPH--hemoprotein reductase] + O2 = 19-oxo-androst-4-ene-3,17-dione + oxidized [NADPH--hemoprotein reductase] + 2 H2O + H(+). The enzyme catalyses 19-oxo-androst-4-ene-3,17-dione + reduced [NADPH--hemoprotein reductase] + O2 = estrone + formate + oxidized [NADPH--hemoprotein reductase] + H2O + 2 H(+). The catalysed reaction is estrone + reduced [NADPH--hemoprotein reductase] + O2 = 2-hydroxyestrone + oxidized [NADPH--hemoprotein reductase] + H2O + H(+). It catalyses the reaction 17beta-hydroxy-5alpha-androstan-3-one + reduced [NADPH--hemoprotein reductase] + O2 = 17beta,19-dihydroxy-3-oxo-5alpha-androstanone + oxidized [NADPH--hemoprotein reductase] + H2O + H(+). It carries out the reaction 17beta,19-dihydroxy-3-oxo-5alpha-androstanone + reduced [NADPH--hemoprotein reductase] + O2 = 17beta-hydroxy-3,19-dioxo-5alpha-androstanone + oxidized [NADPH--hemoprotein reductase] + 2 H2O + H(+). The enzyme catalyses 17beta-hydroxy-3,19-dioxo-5alpha-androstanone + reduced [NADPH--hemoprotein reductase] + O2 = 17beta-hydroxy-3-oxo-19-nor-5alpha-androst-1-ene + formate + oxidized [NADPH--hemoprotein reductase] + H2O + 2 H(+). Its pathway is steroid hormone biosynthesis. Its function is as follows. A cytochrome P450 monooxygenase that catalyzes the conversion of C19 androgens, androst-4-ene-3,17-dione (androstenedione) and testosterone to the C18 estrogens, estrone and estradiol, respectively. Catalyzes three successive oxidations of C19 androgens: two conventional oxidations at C19 yielding 19-hydroxy and 19-oxo/19-aldehyde derivatives, followed by a third oxidative aromatization step that involves C1-beta hydrogen abstraction combined with cleavage of the C10-C19 bond to yield a phenolic A ring and formic acid. Alternatively, the third oxidative reaction yields a 19-norsteroid and formic acid. Converts dihydrotestosterone to delta1,10-dehydro 19-nordihydrotestosterone and may play a role in homeostasis of this potent androgen. Also displays 2-hydroxylase activity toward estrone. Mechanistically, uses molecular oxygen inserting one oxygen atom into a substrate, and reducing the second into a water molecule, with two electrons provided by NADPH via cytochrome P450 reductase (CPR; NADPH-ferrihemoprotein reductase). In Canis lupus familiaris (Dog), this protein is Aromatase (CYP19A1).